A 500-amino-acid chain; its full sequence is Beta-glucosidase 30 (500 aa).

The first 25 residues, 1–25, serve as a signal peptide directing secretion; sequence MGIRMGRRLLFTLFLGALFCNGVYA. Gln46 is an a beta-D-glucoside binding site. Asn63 and Asn114 each carry an N-linked (GlcNAc...) asparagine glycan. Residues His149 and 194 to 195 contribute to the a beta-D-glucoside site; that span reads NE. The active-site Proton donor is the Glu195. Cysteines 214 and 222 form a disulfide. Tyr338 lines the a beta-D-glucoside pocket. N-linked (GlcNAc...) asparagine glycosylation is present at Asn363. Glu409 is a binding site for a beta-D-glucoside. Glu409 serves as the catalytic Nucleophile. Residues Asn416 and Asn417 are each glycosylated (N-linked (GlcNAc...) asparagine). A beta-D-glucoside is bound by residues Trp456, 463-464, and Phe472; that span reads EW.

It belongs to the glycosyl hydrolase 1 family.

The catalysed reaction is Hydrolysis of terminal, non-reducing beta-D-glucosyl residues with release of beta-D-glucose.. The protein is Beta-glucosidase 30 (BGLU30) of Oryza sativa subsp. japonica (Rice).